Reading from the N-terminus, the 428-residue chain is Serine--tRNA ligase (428 aa).

231-233 contributes to the L-serine binding site; the sequence is TAE. ATP-binding positions include 262–264 and valine 278; that span reads RRE. Position 285 (glutamate 285) interacts with L-serine. 349-352 contacts ATP; sequence EVSS. Serine 384 serves as a coordination point for L-serine.

This sequence belongs to the class-II aminoacyl-tRNA synthetase family. Type-1 seryl-tRNA synthetase subfamily. In terms of assembly, homodimer. The tRNA molecule binds across the dimer.

The protein localises to the cytoplasm. It catalyses the reaction tRNA(Ser) + L-serine + ATP = L-seryl-tRNA(Ser) + AMP + diphosphate + H(+). The enzyme catalyses tRNA(Sec) + L-serine + ATP = L-seryl-tRNA(Sec) + AMP + diphosphate + H(+). It functions in the pathway aminoacyl-tRNA biosynthesis; selenocysteinyl-tRNA(Sec) biosynthesis; L-seryl-tRNA(Sec) from L-serine and tRNA(Sec): step 1/1. Functionally, catalyzes the attachment of serine to tRNA(Ser). Is also able to aminoacylate tRNA(Sec) with serine, to form the misacylated tRNA L-seryl-tRNA(Sec), which will be further converted into selenocysteinyl-tRNA(Sec). This is Serine--tRNA ligase from Chlamydia muridarum (strain MoPn / Nigg).